A 225-amino-acid chain; its full sequence is Lipoprotein-releasing system ATP-binding protein LolD (225 aa).

The region spanning 5-225 (LEVMDLTKGY…RLVDGRVVAD (221 aa)) is the ABC transporter domain. 41 to 48 (GASGTGKS) contributes to the ATP binding site.

The protein belongs to the ABC transporter superfamily. Lipoprotein translocase (TC 3.A.1.125) family. In terms of assembly, the complex is composed of two ATP-binding proteins (LolD) and two transmembrane proteins (LolC and LolE).

Its subcellular location is the cell inner membrane. In terms of biological role, part of the ABC transporter complex LolCDE involved in the translocation of mature outer membrane-directed lipoproteins, from the inner membrane to the periplasmic chaperone, LolA. Responsible for the formation of the LolA-lipoprotein complex in an ATP-dependent manner. The polypeptide is Lipoprotein-releasing system ATP-binding protein LolD (Geobacter metallireducens (strain ATCC 53774 / DSM 7210 / GS-15)).